A 225-amino-acid polypeptide reads, in one-letter code: DNA repair and recombination protein RadB (225 aa).

Belongs to the eukaryotic RecA-like protein family. RadB subfamily.

In terms of biological role, involved in DNA repair and in homologous recombination. May regulate the cleavage reactions of the branch-structured DNA. Has a very weak ATPase activity that is not stimulated by DNA. Binds DNA but does not promote DNA strands exchange. The protein is DNA repair and recombination protein RadB of Methanococcoides burtonii (strain DSM 6242 / NBRC 107633 / OCM 468 / ACE-M).